A 182-amino-acid polypeptide reads, in one-letter code: Methyl-CpG-binding domain-containing protein 5 (182 aa).

Disordered regions lie at residues 1–56 (MSNG…GTVD) and 80–126 (HGTP…KPLN). The 77-residue stretch at 25–101 (KRATPGDDNW…ENGDSHSEHS (77 aa)) folds into the MBD domain. A compositionally biased stretch (basic and acidic residues) spans 92–105 (ENGDSHSEHSEGRG). The span at 106-115 (SARRQTKSNK) shows a compositional bias: basic residues.

In terms of assembly, homodimer and heterodimer with MBD6. Interacts with DDM1 via its MBD domain. As to expression, mostly expressed in flowers, and, to a lower extent, in seedlings, buds, stems and mature seeds, but barely in roots, exclusively in root meristem cells at tips (at protein level).

Its subcellular location is the nucleus. It localises to the chromosome. Functionally, transcriptional regulator that binds CpG islands in promoters where the DNA is methylated at position 5 of cytosine within CpG dinucleotides. In addition, binds specifically methylated m(5)CpNpN but not m(5)CpNpG (N is A, T or C). Plays probably a role in gene silencing. This Arabidopsis thaliana (Mouse-ear cress) protein is Methyl-CpG-binding domain-containing protein 5 (MBD5).